The primary structure comprises 394 residues: Phosphoglycerate kinase (394 aa).

Substrate is bound by residues 21–23 (DFN), Arg-36, 59–62 (HLGR), Arg-118, and Arg-151. A Phosphoserine modification is found at Ser-183. Residues Lys-201 and Gly-292 each coordinate ATP. Thr-299 is modified (phosphothreonine). Residues Glu-323 and 350–353 (GGDS) contribute to the ATP site.

It belongs to the phosphoglycerate kinase family. In terms of assembly, monomer.

The protein localises to the cytoplasm. It catalyses the reaction (2R)-3-phosphoglycerate + ATP = (2R)-3-phospho-glyceroyl phosphate + ADP. It participates in carbohydrate degradation; glycolysis; pyruvate from D-glyceraldehyde 3-phosphate: step 2/5. The sequence is that of Phosphoglycerate kinase from Bacillus cereus (strain ZK / E33L).